The following is a 120-amino-acid chain: Large ribosomal subunit protein bL20 (120 aa).

This sequence belongs to the bacterial ribosomal protein bL20 family.

Binds directly to 23S ribosomal RNA and is necessary for the in vitro assembly process of the 50S ribosomal subunit. It is not involved in the protein synthesizing functions of that subunit. This is Large ribosomal subunit protein bL20 from Methylobacillus flagellatus (strain ATCC 51484 / DSM 6875 / VKM B-1610 / KT).